Here is a 101-residue protein sequence, read N- to C-terminus: Small ribosomal subunit protein uS14 (101 aa).

This sequence belongs to the universal ribosomal protein uS14 family. Part of the 30S ribosomal subunit. Contacts proteins S3 and S10.

Its function is as follows. Binds 16S rRNA, required for the assembly of 30S particles and may also be responsible for determining the conformation of the 16S rRNA at the A site. The protein is Small ribosomal subunit protein uS14 of Shewanella sp. (strain ANA-3).